We begin with the raw amino-acid sequence, 643 residues long: Phosphatidylinositol-3,5-bisphosphate 3-phosphatase MTMR2 (643 aa).

Polar residues-rich tracts occupy residues 1-12 (MEKSSSCESLGS) and 23-40 (DSLS…VHTK). Residues 1–56 (MEKSSSCESLGSQPAAARPPSVDSLSSASTSHSENSVHTKSASVVSSDSISTSADN) are disordered. Phosphoserine occurs at positions 6 and 9. Residues 41–55 (SASVVSSDSISTSAD) are compositionally biased toward low complexity. S58 is modified (phosphoserine). One can recognise a GRAM domain in the interval 68–139 (NKLAEMEEPP…GVINRVEKIG (72 aa)). The Myotubularin phosphatase domain maps to 205-580 (GWKLYDPLLE…RHLELWVGYY (376 aa)). The a 1,2-diacyl-sn-glycero-3-phospho-(1D-myo-inositol-3,5-bisphosphate) site is built by N330, N355, and I356. The a 1,2-diacyl-sn-glycero-3-phospho-(1D-myo-inositol-3-phosphate) site is built by N330, N355, and I356. The Phosphocysteine intermediate role is filled by C417. A 1,2-diacyl-sn-glycero-3-phospho-(1D-myo-inositol-3,5-bisphosphate) contacts are provided by S418, D419, G420, W421, D422, R423, R459, and R463. A 1,2-diacyl-sn-glycero-3-phospho-(1D-myo-inositol-3-phosphate) is bound by residues S418, D419, G420, W421, D422, and R423. R463 is an a 1,2-diacyl-sn-glycero-3-phospho-(1D-myo-inositol-3-phosphate) binding site. A coiled-coil region spans residues 593-627 (IHNRYKELLAKRAELQKKVEELQREISNRSTSSSE). Residues 615–643 (QREISNRSTSSSERASSPAQCVTPVQTVV) form a disordered region. A compositionally biased stretch (low complexity) spans 620 to 631 (NRSTSSSERASS). The segment covering 632–643 (PAQCVTPVQTVV) has biased composition (polar residues).

This sequence belongs to the protein-tyrosine phosphatase family. Non-receptor class myotubularin subfamily. In terms of assembly, homodimer (via coiled-coil domain). Heterotetramer consisting of one MTMR2 dimer and one SBF2/MTMR13 dimer; specifically in peripheral nerves stabilizes SBF2/MTMR13 at the membranes and increases MTMR2 catalytic activity towards phosphatidylinositol 3,5-bisphosphate and to a lesser extent towards phosphatidylinositol 3-phosphate. Heterodimer with SBF1/MTMR5; acts as an adapter for the phosphatase MTMR2 to regulate MTMR2 catalytic activity and subcellular location. Heterodimer with MTMR12. Phosphorylation at Ser-58 decreases MTMR2 localization to endocytic vesicular structures.

The protein localises to the cytoplasm. It is found in the early endosome membrane. The protein resides in the perinuclear region. It localises to the cell projection. Its subcellular location is the axon. The protein localises to the endosome membrane. It catalyses the reaction a 1,2-diacyl-sn-glycero-3-phospho-(1D-myo-inositol-3,5-bisphosphate) + H2O = a 1,2-diacyl-sn-glycero-3-phospho-(1D-myo-inositol-5-phosphate) + phosphate. It carries out the reaction a 1,2-diacyl-sn-glycero-3-phospho-(1D-myo-inositol-3-phosphate) + H2O = a 1,2-diacyl-sn-glycero-3-phospho-(1D-myo-inositol) + phosphate. The enzyme catalyses 1,2-dioctanoyl-sn-glycero-3-phospho-(1-D-myo-inositol-3-phosphate) + H2O = 1,2-dioctanoyl-sn-glycero-3-phospho-(1D-myo-inositol) + phosphate. The catalysed reaction is 1,2-dioctanoyl-sn-glycero-3-phospho-(1D-myo-inositol-3,5-bisphosphate) + H2O = 1,2-dioctanoyl-sn-glycero-3-phospho-(1D-myo-inositol-5-phosphate) + phosphate. Functionally, lipid phosphatase that specifically dephosphorylates the D-3 position of phosphatidylinositol 3-phosphate and phosphatidylinositol 3,5-bisphosphate, generating phosphatidylinositol and phosphatidylinositol 5-phosphate. Regulates the level of these phosphoinositides critical for various biological processes including autophagy initiation and autophagosome maturation. The polypeptide is Phosphatidylinositol-3,5-bisphosphate 3-phosphatase MTMR2 (Pongo abelii (Sumatran orangutan)).